We begin with the raw amino-acid sequence, 296 residues long: (+)-neomenthol dehydrogenase (296 aa).

16 to 40 (RGIGFEICRQLASEGIRVVLTSRDE) lines the NADP(+) pocket. Position 164 (serine 164) interacts with substrate. Tyrosine 220 functions as the Proton acceptor in the catalytic mechanism.

Belongs to the short-chain dehydrogenases/reductases (SDR) family. Monomer.

Its subcellular location is the cytoplasm. It catalyses the reaction (+)-neomenthol + NADP(+) = (1R,4S)-menthone + NADPH + H(+). Its function is as follows. Aldehyde reductase that catalyzes the reduction of the aldehyde carbonyl groups on saturated and alpha,beta-unsaturated aldehydes with more than 5 carbons. Involved in basal resistance against pathogens. The polypeptide is (+)-neomenthol dehydrogenase (SDR1) (Arabidopsis thaliana (Mouse-ear cress)).